The primary structure comprises 1158 residues: Serine/threonine/tyrosine-interacting-like protein 2 (1158 aa).

Disordered stretches follow at residues 1–21 (MATR…DEAN), 280–303 (EERE…GTGS), 315–337 (EEED…QASK), 360–392 (LLSD…VERI), 407–444 (GYRR…ESVS), 492–527 (SRRY…GSEA), 559–582 (KDLG…KNPS), 597–622 (QKKV…LAKK), 873–915 (KVKE…CSSL), and 940–1135 (SGLR…MDDE). The segment covering 8-19 (EEEQVVPSEEDE) has biased composition (acidic residues). The Tyrosine-protein phosphatase domain maps to 132–280 (NEVDEVWPNV…LRELNEKLME (149 aa)). A compositionally biased stretch (polar residues) spans 322–337 (SHLSGSSLGKATQASK). Ser377 is modified (phosphoserine). Phosphothreonine is present on Thr433. Residues 435 to 444 (SESSAWESVS) are compositionally biased toward low complexity. A compositionally biased stretch (basic and acidic residues) spans 500 to 517 (KREEAADRSSEAGSRVRE). Ser509 carries the phosphoserine modification. The segment covering 600-619 (VGSENKEEVVELSKGEDSAL) has biased composition (basic and acidic residues). Residues 877 to 890 (DEDDGVGDGDEDTD) show a composition bias toward acidic residues. 2 stretches are compositionally biased toward polar residues: residues 897-914 (RYSS…TCSS) and 952-966 (SDWS…TRSS). Low complexity predominate over residues 974-983 (KSSSYKFSKS). At Ser985 the chain carries Phosphoserine. Positions 990-999 (TSSYHEANGN) are enriched in polar residues. The segment covering 1000–1012 (SVRSTSRFSSSST) has biased composition (low complexity). Phosphoserine is present on Ser1036. Composition is skewed to basic and acidic residues over residues 1044 to 1056 (RTPE…ESPE), 1064 to 1079 (RSRD…KSDF), and 1094 to 1111 (RSEE…EEGR). Acidic residues predominate over residues 1126 to 1135 (REEEEEMDDE).

Belongs to the protein-tyrosine phosphatase family. Non-receptor class dual specificity subfamily.

It localises to the cytoplasm. It is found in the myofibril. The protein localises to the sarcomere. In terms of biological role, may be required for myofiber maturation. The protein is Serine/threonine/tyrosine-interacting-like protein 2 of Homo sapiens (Human).